Here is a 2094-residue protein sequence, read N- to C-terminus: Nuclear mitotic apparatus protein 1 (2094 aa).

Residues 1–210 form a head (Globular) region; that stretch reads MTLHATRAAT…SPMGDILQTP (210 aa). The residue at position 160 (Ser-160) is a Phosphoserine. A Phosphothreonine modification is found at Thr-161. Phosphoserine is present on residues Ser-167 and Ser-201. A Phosphothreonine modification is found at Thr-209. Positions 211-1681 form a coiled coil; that stretch reads QFQMRRLKKQ…ADQQLRDLGK (1471 aa). Residue Ser-269 is modified to Phosphoserine. N6-acetyllysine is present on Lys-377. Ser-386 and Ser-398 each carry phosphoserine. Position 443 is an N6-acetyllysine (Lys-443). Disordered regions lie at residues 617–636 and 723–759; these read QLQA…TQAQ and LKEQ…AGRK. The segment covering 627–636 has biased composition (polar residues); sequence NAQTSVTQAQ. An N6-acetyllysine modification is found at Lys-878. Disordered regions lie at residues 921 to 1000, 1081 to 1143, and 1173 to 1223; these read SLEL…TQER, LVKK…EGLT, and ELGH…SSLI. Polar residues predominate over residues 935–951; that stretch reads ASDQLGEQQGRPFSSTH. 2 stretches are compositionally biased toward basic and acidic residues: residues 956 to 972 and 983 to 998; these read AMER…ERLR and QEER…RLTQ. Phosphoserine is present on Ser-1183. A compositionally biased stretch (basic and acidic residues) spans 1194–1206; that stretch reads KAQDHSKAEEEWK. Ser-1221 bears the Phosphoserine mark. Position 1507 is an N6-acetyllysine (Lys-1507). Position 1583 is a phosphoserine (Ser-1583). Lys-1681 participates in a covalent cross-link: Glycyl lysine isopeptide (Lys-Gly) (interchain with G-Cter in SUMO2). The interval 1681-1858 is membrane-binding domain 1; sequence KFQVATDALK…NSALLSLPGY (178 aa). The segment at 1682 to 2094 is tail (Globular); sequence FQVATDALKS…TPRAKGKVKH (413 aa). 3 positions are modified to phosphoserine: Ser-1703, Ser-1706, and Ser-1710. Positions 1718–1743 are disordered; the sequence is SVASKLPRTQPDGTSVPGEPASPISQ. The short motif at 1724–1730 is the Tankyrase-binding domain element; it reads PRTQPDG. A phosphoserine mark is found at Ser-1739 and Ser-1742. Residue Lys-1748 forms a Glycyl lysine isopeptide (Lys-Gly) (interchain with G-Cter in SUMO1); alternate linkage. Lys-1748 participates in a covalent cross-link: Glycyl lysine isopeptide (Lys-Gly) (interchain with G-Cter in SUMO2); alternate. Residue Ser-1751 is modified to Phosphoserine. Position 1754 is a phosphoserine; by PLK1 (Ser-1754). Residue Tyr-1756 is modified to Phosphotyrosine. A Phosphothreonine modification is found at Thr-1758. The interval 1760–1795 is disordered; that stretch reads TPARGQAPLETSLDSLGDAFPDSGRKTRSARRRTTQ. Residues 1770–1792 are 4.1-binding domain; the sequence is TSLDSLGDAFPDSGRKTRSARRR. Phosphoserine; by PLK1 is present on Ser-1771. 2 positions are modified to phosphoserine: Ser-1774 and Ser-1782. At Thr-1786 the chain carries Phosphothreonine. Lys-1804 is covalently cross-linked (Glycyl lysine isopeptide (Lys-Gly) (interchain with G-Cter in SUMO2)). Disordered regions lie at residues 1807–1883 and 1937–2094; these read LEEP…GRNS and EMKT…KVKH. A phosphoserine mark is found at Ser-1812 and Ser-1815. The span at 1812 to 1839 shows a compositional bias: polar residues; that stretch reads SANSSFYSTQSAPASQANLRATSSTQSL. A Phosphoserine; by PLK1 modification is found at Ser-1816. Tyr-1818 carries the post-translational modification Phosphotyrosine. The residue at position 1822 (Ser-1822) is a Phosphoserine. Ser-1826 carries the phosphoserine; alternate modification. Ser-1826 carries an O-linked (GlcNAc) serine; alternate glycan. Phosphoserine is present on residues Ser-1844 and Ser-1869. The interval 1864-1967 is tubulin-binding domain; that stretch reads SSARRSQARM…AEGVGITTRQ (104 aa). Residues 1874–1908 are GPSM2-binding domain; the sequence is SSGAPQGRNSFYMGTCQDEPEQLDDWNRIAELQQR. The span at 1937–1948 shows a compositional bias: basic and acidic residues; the sequence is EMKTGDPRETLR. Ser-1951 carries the post-translational modification Phosphoserine. The segment at 1963 to 2042 is membrane-binding domain 2; it reads ITTRQQRKRV…SILNTPKKLG (80 aa). Residues 1966–1971 carry the Nuclear localization signal motif; it reads RQQRKR. A phosphoserine mark is found at Ser-1973 and Ser-1974. The residue at position 1982 (Thr-1982) is a Phosphothreonine. A Phosphoserine modification is found at Ser-1985. Thr-1997 carries the post-translational modification Phosphothreonine; by CDK1. The span at 1997–2006 shows a compositional bias: basic and acidic residues; the sequence is TPRDRHEGRK. Ser-2029 bears the Phosphoserine mark. Position 2037 is a phosphothreonine (Thr-2037). Phosphoserine is present on residues Ser-2044 and Ser-2059. At Ser-2069 the chain carries Phosphoserine; by CDK1. Low complexity predominate over residues 2073 to 2085; that stretch reads ATTTTGTATVATT. Thr-2085 carries the post-translational modification Phosphothreonine; by CDK1.

As to quaternary structure, homodimer. Also forms multiarm oligomers by association of C-terminal tail domains, oligomers may further assemble to form a hexagonal nuclear lattice-like network. Associates with the dynein-dynactin complex; this association promotes the transport and accumulation of NUMA1 at the mitotic spindle poles that is inhibited by the BRISC complex in a PLK1-dependent manner. Part of a spindle orientation complex at least composed of GNAI1, GPSM2 and NUMA1. Interacts (via C-terminus) with microtubules (MTs); this interaction is direct and promotes both MT bundle formation and stability in a dynein-dynactin complex- and CDK1-independent manner. Interacts with EPB41 and EPB41L2; these interactions are negatively regulated by CDK1 during metaphase and are important for anaphase-specific localization of NUMA1 in symmetrically dividing cells. Interacts (via C-terminus) with GPSM2 (via TPR repeats); this interaction is direct, prevented by competitive binding of INSC, is inhibited in a PLK1-dependent manner, blocks the association of NUMA1 with MTs and inhibits NUMA1-induced MT bundle formation, prevents the association of NUMA1 with SPAG5, induces mitotic spindle pole localization of GPSM2, both metaphase cell cortex localization of NUMA1 and mitotic spindle organization. Does not interact with GPSM2 during anaphase. Interacts (via C-terminus) with the nuclear importin alpha/importin beta receptor; this interaction is inhibited by RanGTP. Interacts (via C-terminus) with KPNB1; this interaction is inhibited by RanGTP and the BRISC complex. Interacts with ABRAXAS2 and the BRISC complex; these interactions regulate mitotic spindle assembly. Interacts (via N-terminal end of the coiled-coil domain) with RAE1; this interaction promotes mitotic spindle formation. Interacts (via C-terminus) with SPAG5 (via C-terminus); this interaction promotes the recruitment of SPAG5 to the MTs at spindle poles in a dynein-dynactin-dependent manner and regulates mitotic spindle organization and proper chromosome alignment during mitosis. Interacts with TNKS; this interaction occurs at the onset of mitosis. Interacts with TNKS2. Interacts with tubulin. Interacts with KHDC3 (via C-terminus). Phosphorylation and dephosphorylation on Thr-2037 regulates the extent of cortical NUMA1 and the dynein-dynactin complex localization during mitotic metaphase and anaphase. In metaphase, phosphorylation on Thr-2037 occurs in a kinase CDK1-dependent manner; this phosphorylation maintains low levels of cortical dynein-dynactin complex at metaphase, and hence proper spindle positioning. In anaphase, dephosphorylated on Thr-2037 by phosphatase PPP2CA; this dephosphorylation stimulates its membrane association and with the dynein-dynactin complex its enrichment at the cell cortex, and hence robust spindle elongation. Probably also phosphorylated on Thr-1997 and Ser-2069 by CDK1; these phosphorylations may regulate its cell cortex recruitment during metaphase and anaphase. Phosphorylated on Ser-1751, Ser-1754, Ser-1771 and Ser-1816 by PLK1; these phosphorylations induce cortical dynein-dynactin complex dissociation from the NUMA1-GPSM2 complex and negatively regulates cortical dynein-dynactin complex localization. In terms of processing, ADP-ribosylated by TNKS at the onset of mitosis; ADP-ribosylation is not required for its localization to spindle poles. Post-translationally, O-glycosylated during cytokinesis at sites identical or close to phosphorylation sites, this interferes with the phosphorylation status. Ubiquitinated with 'Lys-63'-linked polyubiquitin chains. Deubiquitination by the BRISC complex is important for the incorporation of NUMA1 into mitotic spindle poles and normal spindle pole function, probably by modulating interactions between NUMA1, dynein-dynactin complex and importin-beta. As to expression, expressed in testis, speen, liver, lung, spinal cord and brain. Expressed in Purkinje neurons (at protein level).

It is found in the nucleus. It localises to the nucleoplasm. Its subcellular location is the nucleus matrix. The protein localises to the chromosome. The protein resides in the cytoplasm. It is found in the cytoskeleton. It localises to the microtubule organizing center. Its subcellular location is the centrosome. The protein localises to the spindle pole. The protein resides in the cell cortex. It is found in the cell membrane. It localises to the lateral cell membrane. In terms of biological role, microtubule (MT)-binding protein that plays a role in the formation and maintenance of the spindle poles and the alignement and the segregation of chromosomes during mitotic cell division. Functions to tether the minus ends of MTs at the spindle poles, which is critical for the establishment and maintenance of the spindle poles. Plays a role in the establishment of the mitotic spindle orientation during metaphase and elongation during anaphase in a dynein-dynactin-dependent manner. In metaphase, part of a ternary complex composed of GPSM2 and G(i) alpha proteins, that regulates the recruitment and anchorage of the dynein-dynactin complex in the mitotic cell cortex regions situated above the two spindle poles, and hence regulates the correct oritentation of the mitotic spindle. During anaphase, mediates the recruitment and accumulation of the dynein-dynactin complex at the cell membrane of the polar cortical region through direct association with phosphatidylinositol 4,5-bisphosphate (PI(4,5)P2), and hence participates in the regulation of the spindle elongation and chromosome segregation. Also binds to other polyanionic phosphoinositides, such as phosphatidylinositol 3-phosphate (PIP), lysophosphatidic acid (LPA) and phosphatidylinositol triphosphate (PIP3), in vitro. Also required for proper orientation of the mitotic spindle during asymmetric cell divisions. Plays a role in mitotic MT aster assembly. Involved in anastral spindle assembly. Positively regulates TNKS protein localization to spindle poles in mitosis. Highly abundant component of the nuclear matrix where it may serve a non-mitotic structural role, occupies the majority of the nuclear volume. Required for epidermal differentiation and hair follicle morphogenesis. The chain is Nuclear mitotic apparatus protein 1 from Mus musculus (Mouse).